A 460-amino-acid polypeptide reads, in one-letter code: DEAD-box helicase Dbp80 (460 aa).

S26 is subject to Phosphoserine. T30 is modified (phosphothreonine). The Q motif motif lies at 73–101 (KTFEALHLKASLLKGIYAMGFNTPSKIQE). A Helicase ATP-binding domain is found at 106 to 276 (TLLADPPQNM…RLIVADPTII (171 aa)). 119–126 (SQSGTGKT) contributes to the ATP binding site. The DEAD box signature appears at 223–226 (DEAD). Residues 287–455 (NIKQYYVKCK…VLNTDSADDI (169 aa)) form the Helicase C-terminal domain.

The protein belongs to the DEAD box helicase family. DDX19/DBP5 subfamily.

Its subcellular location is the cytoplasm. It localises to the nucleus. The protein localises to the nucleoplasm. It carries out the reaction ATP + H2O = ADP + phosphate + H(+). In terms of biological role, ATP-dependent RNA helicase involved in mRNA export from the nucleus. This Drosophila melanogaster (Fruit fly) protein is DEAD-box helicase Dbp80 (Dbp80).